The chain runs to 143 residues: Small ribosomal subunit protein uS12 (143 aa).

Hydroxyproline is present on proline 62.

Belongs to the universal ribosomal protein uS12 family.

The polypeptide is Small ribosomal subunit protein uS12 (rps23) (Dictyostelium discoideum (Social amoeba)).